The sequence spans 85 residues: Small ribosomal subunit protein uS17 (85 aa).

It belongs to the universal ribosomal protein uS17 family. Part of the 30S ribosomal subunit.

In terms of biological role, one of the primary rRNA binding proteins, it binds specifically to the 5'-end of 16S ribosomal RNA. This is Small ribosomal subunit protein uS17 from Trichlorobacter lovleyi (strain ATCC BAA-1151 / DSM 17278 / SZ) (Geobacter lovleyi).